Reading from the N-terminus, the 277-residue chain is Collectin-10 (277 aa).

The first 27 residues, 1-27 (MNGFRVLLRSNLSMLLLLALLHFQSLG), serve as a signal peptide directing secretion. N-linked (GlcNAc...) asparagine glycosylation is present at asparagine 11. The disordered stretch occupies residues 41–103 (THTISPGPKG…IGKKGDKGEK (63 aa)). In terms of domain architecture, Collagen-like spans 45-103 (SPGPKGDDGERGDTGEEGKDGKVGRQGPKGVKGELGDMGAQGNIGKSGPIGKKGDKGEK). Residues 49–67 (KGDDGERGDTGEEGKDGKV) are compositionally biased toward basic and acidic residues. The C-type lectin domain maps to 155–271 (TEEKFYYIVQ…CHLTMYFVCE (117 aa)). 2 disulfides stabilise this stretch: cysteine 176/cysteine 270 and cysteine 248/cysteine 262. N-linked (GlcNAc...) asparagine glycosylation is present at asparagine 258.

The protein belongs to the COLEC10/COLEC11 family. In terms of tissue distribution, expressed mainly in the liver and stomach, but also in muscles, testes, and intestines.

The protein localises to the secreted. It localises to the golgi apparatus. The protein resides in the cytoplasm. Its function is as follows. Lectin that binds to various sugars: galactose &gt; mannose = fucose &gt; N-acetylglucosamine &gt; N-acetylgalactosamine. Acts as a chemoattractant, probably involved in the regulation of cell migration. This is Collectin-10 (Colec10) from Mus musculus (Mouse).